We begin with the raw amino-acid sequence, 167 residues long: Protein MIX23 (167 aa).

Residues 81–108 (QLDQDRNTSKSPLKSQQQLPSSSTTQVS) are disordered. Over residues 89–106 (SKSPLKSQQQLPSSSTTQ) the composition is skewed to low complexity.

It belongs to the MIX23 family.

The chain is Protein MIX23 (cid2) from Schizosaccharomyces pombe (strain 972 / ATCC 24843) (Fission yeast).